The chain runs to 816 residues: MGEAAGDRVLSRLHSVRERIGDSLSAHPNELVAVFTRLVNLGKGMLQAHQIIAEYNNAISEADREKLKDGAFEDVLRSAQEGIVISPWVALAIRPRPGVWEYVRVNVSELAVELLTVPEYLQFKEQLVEEGTNNNFVLELDFEPFNASFPRPSLSKSIGNGVQFLNRHLSSKLFHDKESMYPLLNFLRAHNYKGMTMMLNDRIRSLSALQGALRKAEEHLSGLSADTPYSEFHHRFQELGLEKGWGDCAKRSQETIHLLLDLLEAPDPSTLEKFLGTIPMVFNVVIMSPHGYFAQANVLGYPDTGGQVVYILDQVRAMENEMLLRIKQQGLNITPRILIVTRLLPDATGTTCGQRLEKVLGTEHTHILRVPFRTENGIVRKWISRFEVWPYLETFTDDVAHEIAGELQANPDLIIGNYSDGNLVACLLAHKMGVTHCTIAHALEKTKYPNSDLYWKKFEDHYHFSCQFTTDLIAMNHADFIITSTFQEIAGNKDTVGQYESHMAFTMPGLYRVVHGIDVFDPKFNIVSPGADMSIYFPYSESRKRLTSLHPEIEELLYSEVDNNEHKFMLKDRNKPIIFSMARLDRVKNLTGLVELYGRNPRLQELVNLVVVCGDHGNPSKDKEEQAEFKKMFDLIEQYNLNGHIRWISAQMNRVRNGELYRYICDTKGAFVQPAFYEAFGLTVVESMTCGLPTFATAYGGPAEIIVNGVSGFHIDPYQGDKASALLVEFFEKCQEDPSHWTKISQGGLQRIEEKYTWKLYSERLMTLTGVYGFWKYVSNLERRETRRYLEMLYALKYRTMASTVPLAVEGEPSNK.

Residues 280–757 (MVFNVVIMSP…GLQRIEEKYT (478 aa)) are GT-B glycosyltransferase.

This sequence belongs to the glycosyltransferase 1 family. Plant sucrose synthase subfamily. Homotetramer or heterotetramer with SUS2. In terms of tissue distribution, expressed in root phloem and leaf mesophyll. Expressed in phloem tissues and aleurone layers of seeds and at lower levels in the pericarp and endosperm cells (at protein level). Predominantly expressed in elongating tissues including roots, developing leaves and internodes.

The catalysed reaction is an NDP-alpha-D-glucose + D-fructose = a ribonucleoside 5'-diphosphate + sucrose + H(+). In terms of biological role, sucrose-cleaving enzyme that provides UDP-glucose and fructose for various metabolic pathways. The polypeptide is Sucrose synthase 1 (SUS1) (Oryza sativa subsp. japonica (Rice)).